Here is a 536-residue protein sequence, read N- to C-terminus: Beta-hexosaminidase subunit beta (536 aa).

The signal sequence occupies residues methionine 1–leucine 31. N-linked (GlcNAc...) asparagine glycosylation is present at asparagine 63. Cysteine 70 and cysteine 116 are joined by a disulfide. Residues asparagine 169 and asparagine 306 are each glycosylated (N-linked (GlcNAc...) asparagine). 2 cysteine pairs are disulfide-bonded: cysteine 288/cysteine 339 and cysteine 513/cysteine 530. Glutamate 334 (proton donor) is an active-site residue.

It belongs to the glycosyl hydrolase 20 family. In terms of assembly, there are 3 forms of beta-hexosaminidase: hexosaminidase A is a heterodimer composed of one subunit alpha and one subunit beta (chain A and B); hexosaminidase B is a homodimer of two beta subunits (two chains A and B); hexosaminidase S is a homodimer of two alpha subunits. The composition of the dimer (isozyme A versus isozyme S) has a significant effect on the substrate specificity of the alpha subunit active site.

It localises to the lysosome. The protein resides in the cytoplasmic vesicle. It is found in the secretory vesicle. Its subcellular location is the cortical granule. It catalyses the reaction Hydrolysis of terminal non-reducing N-acetyl-D-hexosamine residues in N-acetyl-beta-D-hexosaminides.. It carries out the reaction N-acetyl-beta-D-galactosaminyl-(1-&gt;4)-beta-D-3-sulfogalactosyl-(1-&gt;4)-beta-D-glucosyl-(1&lt;-&gt;1')-ceramide + H2O = a beta-D-3-sulfogalactosyl-(1-&gt;4)-beta-D-glucosyl-(1&lt;-&gt;1')-ceramide + N-acetyl-beta-D-galactosamine. The enzyme catalyses a ganglioside GM2 (d18:1(4E)) + H2O = a ganglioside GM3 (d18:1(4E)) + N-acetyl-beta-D-galactosamine. The catalysed reaction is a ganglioside GM2 + H2O = a ganglioside GM3 + N-acetyl-beta-D-galactosamine. It catalyses the reaction beta-D-GalNAc-(1-&gt;4)-alpha-L-IdoA-(1-&gt;3)-beta-D-GalNAc-4-sulfate-(1-&gt;4)-alpha-L-IdoA-(1-&gt;3)-D-GalNAc-4-sulfate + H2O = alpha-L-IdoA-(1-&gt;3)-beta-D-GalNAc-4-sulfate-(1-&gt;4)-alpha-L-IdoA-(1-&gt;3)-D-GalNAc-4-sulfate + N-acetyl-D-galactosamine. It carries out the reaction N-acetyl-beta-D-6-sulfogalactosaminyl-(1-&gt;4)-alpha-L-iduronyl-(1-&gt;3)-N-acetyl-D-6-sulfogalactosamine + H2O = alpha-L-iduronyl-(1-&gt;3)-N-acetyl-D-6-sulfogalactosamine + N-acetyl-D-6-sulfogalactosamine. Its activity is regulated as follows. Addition of GM2A stimulates the hydrolysis of sulfated glycosphingolipid SM2 and the ganglioside GM2. In terms of biological role, hydrolyzes the non-reducing end N-acetyl-D-hexosamine and/or sulfated N-acetyl-D-hexosamine of glycoconjugates, such as the oligosaccharide moieties from proteins and neutral glycolipids, or from certain mucopolysaccharides. The isozyme B does not hydrolyze each of these substrates, however hydrolyzes efficiently neutral oligosaccharide. Only the isozyme A is responsible for the degradation of GM2 gangliosides in the presence of GM2A. During fertilization is responsible, at least in part, for the zona block to polyspermy. Present in the cortical granules of non-activated oocytes, is exocytosed during the cortical reaction in response to oocyte activation and inactivates the sperm galactosyltransferase-binding site, accounting for the block in sperm binding to the zona pellucida. The polypeptide is Beta-hexosaminidase subunit beta (Mus musculus (Mouse)).